The chain runs to 159 residues: Cytochrome c nitrite reductase subunit NrfH (159 aa).

The Cytoplasmic segment spans residues 2–14 (SEEKSRNGPARLK). Residues 15–33 (LVLGGATLGVVALATVAFG) form a helical; Signal-anchor for type II membrane protein membrane-spanning segment. The Periplasmic portion of the chain corresponds to 34 to 159 (MKYTDQRPFC…PISTREVADE (126 aa)). The heme site is built by cysteine 43, cysteine 46, methionine 49, histidine 61, and cysteine 66. Residue asparagine 67 coordinates a menaquinol. 2 residues coordinate heme: cysteine 69 and histidine 70. A menaquinol is bound by residues lysine 82 and aspartate 89. Residue aspartate 89 coordinates heme. The tract at residues 99–100 (GD) is interaction with NrfA. Heme contacts are provided by cysteine 116, cysteine 119, histidine 120, cysteine 136, cysteine 139, histidine 140, and histidine 145. The interval 123–158 (TNVEVASMEAKKYCTDCHRNVQHMRMKPISTREVAD) is interaction with NrfA.

This sequence belongs to the NapC/NirT/NrfH family. As to quaternary structure, component of the NrfHA cytochrome c nitrite reductase complex composed of 4 NrfA catalytic subunits and 2 NrfH quinone-binding subunits. Interacts with NrfA homodimer. It depends on heme as a cofactor.

It is found in the cell inner membrane. In terms of biological role, electron donor subunit of the cytochrome c nitrite reductase holocomplex NrfHA. Acquires electrons from the menaquinone pool and mediates their transfer to the catalytic subunit NrfA in an anaerobic respiratory process of nitrite. The other biological function of the NrfHA holocomplex is to detoxify nitrite. This function is essential for the survival of this organism as it enables it to overcome inhibition by nitrite, which is produced by other organisms living in the same environment. The polypeptide is Cytochrome c nitrite reductase subunit NrfH (Nitratidesulfovibrio vulgaris (strain ATCC 29579 / DSM 644 / CCUG 34227 / NCIMB 8303 / VKM B-1760 / Hildenborough) (Desulfovibrio vulgaris)).